We begin with the raw amino-acid sequence, 88 residues long: uncharacterized protein (88 aa).

This is an uncharacterized protein from Banana bunchy top virus (isolate Autralia) (BBTV).